The sequence spans 257 residues: Large ribosomal subunit protein eL8z (257 aa).

It belongs to the eukaryotic ribosomal protein eL8 family.

The protein is Large ribosomal subunit protein eL8z (RPL7AA) of Arabidopsis thaliana (Mouse-ear cress).